A 263-amino-acid chain; its full sequence is Endonuclease 8 (263 aa).

Residue P2 is the Schiff-base intermediate with DNA of the active site. Catalysis depends on E3, which acts as the Proton donor. Residue K53 is the Proton donor; for beta-elimination activity of the active site. The DNA site is built by Q70, R125, and N169. An FPG-type zinc finger spans residues 229–263; it reads KVFHRDGERCERCGGVIEKTTLSSRPFYWCPGCQH. R253 functions as the Proton donor; for delta-elimination activity in the catalytic mechanism.

It belongs to the FPG family. Zn(2+) serves as cofactor.

It carries out the reaction 2'-deoxyribonucleotide-(2'-deoxyribose 5'-phosphate)-2'-deoxyribonucleotide-DNA = a 3'-end 2'-deoxyribonucleotide-(2,3-dehydro-2,3-deoxyribose 5'-phosphate)-DNA + a 5'-end 5'-phospho-2'-deoxyribonucleoside-DNA + H(+). In terms of biological role, involved in base excision repair of DNA damaged by oxidation or by mutagenic agents. Acts as a DNA glycosylase that recognizes and removes damaged bases. Has a preference for oxidized pyrimidines, such as thymine glycol, 5,6-dihydrouracil and 5,6-dihydrothymine. Has AP (apurinic/apyrimidinic) lyase activity and introduces nicks in the DNA strand. Cleaves the DNA backbone by beta-delta elimination to generate a single-strand break at the site of the removed base with both 3'- and 5'-phosphates. The polypeptide is Endonuclease 8 (Klebsiella pneumoniae (strain 342)).